Here is a 714-residue protein sequence, read N- to C-terminus: Fimbrin-3 (714 aa).

An EF-hand domain is found at 7-55 (VIVSDPWLQSQLTQVELRSLNSKFVALKNQSGKVTLEDLPSVLVKVKSL). 4 Calponin-homology (CH) domains span residues 124-241 (QSEK…KIQL), 269-372 (LPPE…HERN), 393-499 (CRDE…RTHM), and 514-622 (DMTD…YWSL). Actin-binding stretches follow at residues 124–372 (QSEK…HERN) and 393–622 (CRDE…YWSL). Residues 628–662 (SSESSSSSSDSSSTHSTTTTCTSTCTSTDASPAPS) show a composition bias toward low complexity. The disordered stretch occupies residues 628–694 (SSESSSSSSD…NEVSSLTIEE (67 aa)). Polar residues predominate over residues 670–680 (SSLNGEVSSLT). Residues 681-694 (IEEDNEVSSLTIEE) show a composition bias toward acidic residues.

As to quaternary structure, interacts with F-actin.

The protein resides in the cytoplasm. It is found in the cytoskeleton. Functionally, cross-links actin filaments (F-actin). Stabilizes and prevents F-actin depolymerization mediated by profilin. May regulate actin cytoarchitecture, cell cycle, cell division, cell elongation and cytoplasmic tractus. In Arabidopsis thaliana (Mouse-ear cress), this protein is Fimbrin-3.